Here is an 834-residue protein sequence, read N- to C-terminus: Protein ROOT HAIR DEFECTIVE 3 homolog 2 (834 aa).

At 1 to 683 (MGENDDGCST…EAHKRNNNWL (683 aa)) the chain is on the cytoplasmic side. A GB1/RHD3-type G domain is found at 37-252 (GLSYAVVAIM…ISPGGLAGDR (216 aa)). 47 to 54 (GPQSSGKS) is a binding site for GTP. Residues 214–241 (MIVALSSYEEKEKQFEQEVAELRQRFFH) are a coiled coil. Residues 684-704 (PPAWAIVLMIVLGFNEFMMLL) form a helical membrane-spanning segment. Residues 705-707 (KNP) are Lumenal-facing. Residues 708–728 (LYLLGFFVAFLLSKALWVQLD) form a helical membrane-spanning segment. The Cytoplasmic portion of the chain corresponds to 729 to 834 (IPREFQHGAV…NVQESEISQM (106 aa)). Positions 767–783 (TTQEVPDLSASQTYRQQ) are enriched in polar residues. The disordered stretch occupies residues 767–834 (TTQEVPDLSA…NVQESEISQM (68 aa)). Residues 784–803 (SPSHSISSTISESVASNISS) are compositionally biased toward low complexity. The span at 823–834 (TNNVQESEISQM) shows a compositional bias: polar residues.

Belongs to the TRAFAC class dynamin-like GTPase superfamily. GB1/RHD3 GTPase family. RHD3 subfamily. As to expression, expressed in roots, leaves, stems and flowers.

The protein resides in the endoplasmic reticulum membrane. Probable GTP-binding protein that may be involved in cell development. In Arabidopsis thaliana (Mouse-ear cress), this protein is Protein ROOT HAIR DEFECTIVE 3 homolog 2.